The primary structure comprises 289 residues: Splicing factor C9orf78 homolog (289 aa).

Positions 1–12 (MPVVRKIFRRRR) are enriched in basic residues. Disordered stretches follow at residues 1–27 (MPVV…SEEV) and 86–109 (GKDK…TNRR). Residues 5–58 (RKIFRRRRGDSESEEDEQDSEEVRLKLEETREVQNLRKRPNGVSAVALLVGEKV) form an interaction with SNRNP200 region. Phosphoserine occurs at positions 15 and 17. Y147 carries the post-translational modification Phosphotyrosine. A compositionally biased stretch (basic and acidic residues) spans 232–283 (LNAPIRRNKEEPKARPLRVGDTEKPEPERSPPNRKRPANEKATDDYHYEKFK). The disordered stretch occupies residues 232–289 (LNAPIRRNKEEPKARPLRVGDTEKPEPERSPPNRKRPANEKATDDYHYEKFKKMNRRY). At T253 the chain carries Phosphothreonine. S261 is modified (phosphoserine).

Belongs to the TLS1 family. In terms of assembly, component of the spliceosome. Interacts with SNRNP200; the interaction is direct. Interacts with PRPF8.

It is found in the nucleus. It localises to the chromosome. Its subcellular location is the centromere. Its function is as follows. Plays a role in pre-mRNA splicing by promoting usage of the upstream 3'-splice site at alternative NAGNAG splice sites; these are sites featuring alternative acceptor motifs separated by only a few nucleotides. May also modulate exon inclusion events. Plays a role in spliceosomal remodeling by displacing WBP4 from SNRNP200 and may act to inhibit SNRNP200 helicase activity. Binds U5 snRNA. Required for proper chromosome segregation. Not required for splicing of shelterin components. The chain is Splicing factor C9orf78 homolog from Pongo abelii (Sumatran orangutan).